Here is a 637-residue protein sequence, read N- to C-terminus: Probable potassium transport system protein Kup 2 (637 aa).

Positions 1 to 21 (MDLASRDSEAETVEQSSHSGA) are disordered. Helical transmembrane passes span 29–49 (LMLG…IYAF), 68–88 (VLSL…VAFV), 116–136 (LILA…IITP), 150–170 (VTPT…AILF), 180–200 (VAAV…VAGL), 228–248 (AAFV…ALYV), 258–278 (IVLA…FGQG), 300–320 (ALMP…QAVI), 359–379 (LLVA…SSLA), 381–401 (AYGI…FVVM), 409–429 (LAVA…FFLA), and 434–454 (IFEG…IMWT).

This sequence belongs to the HAK/KUP transporter (TC 2.A.72) family.

It localises to the cell inner membrane. The catalysed reaction is K(+)(in) + H(+)(in) = K(+)(out) + H(+)(out). Transport of potassium into the cell. Likely operates as a K(+):H(+) symporter. This chain is Probable potassium transport system protein Kup 2, found in Mesorhizobium japonicum (strain LMG 29417 / CECT 9101 / MAFF 303099) (Mesorhizobium loti (strain MAFF 303099)).